The primary structure comprises 326 residues: MYGIEYTTVLTFLISIILLNYILKSLTRIMDFIIYRFLFIIVILSPFLRAQNYGINLPITGSMDTAYANSTQEETFLTSTLCLYYPTEAATEINDNSWKDTLSQLFLTKGWPTGSVYFKEYTNIASFSVDPQLYCDYNVVLMKYDATLQLDMSELADLILNEWLCNPMDITLYYYQQTDEANKWISMGSSCTIKVCPLNTQTLGIGCLTTDATTFEEVATAEKLVITDVVDGVNHKLDVTTATCTIRNCKKLGPRENVAVIQVGGSDILDITADPTTAPQTERMMRINWKKWWQVFYTVVDYVDQIIQVMSKRSRSLNSAAFYYRV.

The first 50 residues, 1–50 (MYGIEYTTVLTFLISIILLNYILKSLTRIMDFIIYRFLFIIVILSPFLRA), serve as a signal peptide directing secretion. A glycan (N-linked (GlcNAc...) asparagine; by host) is linked at asparagine 69. Cystine bridges form between cysteine 82/cysteine 135, cysteine 165/cysteine 249, cysteine 191/cysteine 244, and cysteine 196/cysteine 207. Position 95 (aspartate 95) interacts with Ca(2+). The interval 165–167 (CNP) is CNP motif; interaction with ITGAV/ITGB3. Positions 177, 206, 214, 216, 228, 229, and 231 each coordinate Ca(2+). An LVD motif; interaction with ITGA4/ITGB1 heterodimer region spans residues 237–239 (LDV). A GPR motif; interaction with ITGAX/ITGB2 region spans residues 253 to 255 (GPR). Position 301 (aspartate 301) interacts with Ca(2+).

Belongs to the rotavirus VP7 family. In terms of assembly, homotrimer; disulfide-linked. 2 Ca(2+) ions bound at each subunit interface in the trimer hold the trimer together. Interacts with the intermediate capsid protein VP6. Interacts with the outer capsid protein VP5*. Interacts with host integrin heterodimer ITGAX/ITGB2. Interacts with host integrin heterodimer ITGA4/ITGB1. Interacts with host integrin heterodimer ITGA2/ITGB1. Post-translationally, N-glycosylated. The N-terminus is blocked possibly by pyroglutamic acid.

It is found in the virion. The protein localises to the host endoplasmic reticulum lumen. Its function is as follows. Calcium-binding protein that interacts with rotavirus cell receptors once the initial attachment by VP4 has been achieved. Rotavirus attachment and entry into the host cell probably involves multiple sequential contacts between the outer capsid proteins VP4 and VP7, and the cell receptors. Following entry into the host cell, low intracellular or intravesicular Ca(2+) concentration probably causes the calcium-stabilized VP7 trimers to dissociate from the virion. This step is probably necessary for the membrane-disrupting entry step and the release of VP4, which is locked onto the virion by VP7. The polypeptide is Outer capsid glycoprotein VP7 (Rotavirus A (isolate RVA/Monkey/South Africa/SA11-H96/1958/G3P5B[2]) (RV-A)).